A 268-amino-acid chain; its full sequence is Probable 6-phosphogluconolactonase 1 (268 aa).

The protein belongs to the glucosamine/galactosamine-6-phosphate isomerase family. 6-phosphogluconolactonase subfamily.

It localises to the cytoplasm. The protein resides in the cytosol. The enzyme catalyses 6-phospho-D-glucono-1,5-lactone + H2O = 6-phospho-D-gluconate + H(+). The protein operates within carbohydrate degradation; pentose phosphate pathway; D-ribulose 5-phosphate from D-glucose 6-phosphate (oxidative stage): step 2/3. Functionally, catalyzes the hydrolysis of 6-phosphogluconolactone to 6-phosphogluconate. The chain is Probable 6-phosphogluconolactonase 1 from Arabidopsis thaliana (Mouse-ear cress).